The chain runs to 419 residues: UDP-N-acetylglucosamine 1-carboxyvinyltransferase 2 (419 aa).

Residue 22–23 participates in phosphoenolpyruvate binding; that stretch reads KN. UDP-N-acetyl-alpha-D-glucosamine is bound at residue R92. Residue C116 is the Proton donor of the active site. C116 carries the post-translational modification 2-(S-cysteinyl)pyruvic acid O-phosphothioketal. UDP-N-acetyl-alpha-D-glucosamine is bound by residues 121–125, D306, and I328; that span reads RPIDL.

It belongs to the EPSP synthase family. MurA subfamily.

The protein resides in the cytoplasm. It catalyses the reaction phosphoenolpyruvate + UDP-N-acetyl-alpha-D-glucosamine = UDP-N-acetyl-3-O-(1-carboxyvinyl)-alpha-D-glucosamine + phosphate. The protein operates within cell wall biogenesis; peptidoglycan biosynthesis. Functionally, cell wall formation. Adds enolpyruvyl to UDP-N-acetylglucosamine. This Streptococcus pyogenes serotype M3 (strain ATCC BAA-595 / MGAS315) protein is UDP-N-acetylglucosamine 1-carboxyvinyltransferase 2.